The primary structure comprises 906 residues: MERDGEQAGQGPRHGPAGNGRELESPAAASLLAPMDLGEEPLEKAERARTAKDPNTYKVLSLVLSVCVLTTILGCIFGLKPSCAKEVKSCKGRCFERTFSNCRCDAACVSLGNCCLDFQETCVEPTHIWTCNKFRCGEKRLSRFVCSCADDCKAHNDCCINYSSVCQEKKSWVEEACETIDAPQCPAEFESPPTLLFSLDGFRAEYLHTWGGLLPVISKLKNCGTYTKNMRPVYPTKTFPNHYSIVTGLYPESHGIIDNKMYDPKMNASFSLKSKEKFNPLWYKGQPIWVTANHQEVRSGTYFWPGSDVEIDGILPDIYKVYNGSVPFEERILAVLEWLQLPSYERPHFYTLYLEEPDSSGHSHGPVSSEVIKALQKVDHIVGMLMDGLKDLGLDKCLNLILISDHGMEQGSCKKYVYLNKYLGDVNNVKVVYGPAARLRPTEVPETYYSFNYEALAKNLSCRETNQHFRPYLKHFLPKRLHFAKNDRIEPLTFYLDPQWQLALNPSERKYCGSGFHGSDNLFSNMQALFIGYGPAFKHGAEVDSFENIEVYNLMCDLLGLIPAPNNESHGSLNHLLKKPIYTPSHPKEESFLSQCPIKSVSSDLGCTCDPSIVPIMDFEKQFNLTTDAVEDVYSMTVPNGRPRNLQKQHRVCLLHQQQFLTGYSLDLLMPLWTSYTFLSNDQFSTDDFSNCLYQDLRIPLSPMHKCSYYKSTSKLSYGFLTPPRLNRVSRQIYSEALLTSNIVPMYQSFQVIWQYLHDTVLRRYAQERNGVNVVSGPVFDFDYDGRYDSSEILKQNTRVIRSQENLIPTHFFIVLTSCKQLSESPLKCTALESSAFLLPHRPDNIESCTHGKQESAWVEELLALHRARVTDVELITGLSFYQDRQESVSELLRLKTHLPIFSQED.

Residues 1-25 form a disordered region; the sequence is MERDGEQAGQGPRHGPAGNGRELES. The Cytoplasmic segment spans residues 1–58; sequence MERDGEQAGQGPRHGPAGNGRELESPAAASLLAPMDLGEEPLEKAERARTAKDPNTYK. Ser25 bears the Phosphoserine mark. A Di-leucine motif motif is present at residues 27–34; the sequence is AAASLLAP. Residues 59 to 79 form a helical; Signal-anchor for type II membrane protein membrane-spanning segment; sequence VLSLVLSVCVLTTILGCIFGL. Residues 80–906 lie on the Extracellular side of the membrane; the sequence is KPSCAKEVKS…THLPIFSQED (827 aa). 2 consecutive SMB domains span residues 86 to 126 and 127 to 170; these read EVKS…VEPT and HIWT…QEKK. Disulfide bonds link Cys90/Cys104, Cys94/Cys122, Cys102/Cys115, Cys108/Cys114, Cys131/Cys148, Cys136/Cys166, Cys146/Cys159, Cys152/Cys158, Cys177/Cys223, and Cys185/Cys397. An N-linked (GlcNAc...) asparagine glycan is attached at Asn161. The segment at 173–573 is phosphodiesterase; the sequence is VEEACETIDA…APNNESHGSL (401 aa). 3 residues coordinate AMP: Asp200, Thr238, and Asn259. 2 residues coordinate Zn(2+): Asp200 and Thr238. Catalysis depends on Thr238, which acts as the AMP-threonine intermediate. CMP contacts are provided by Thr238 and Asn259. Thr238 and Asn259 together coordinate dTMP. Positions 238 and 259 each coordinate GMP. A Phosphothreonine modification is found at Thr238. Residue Asn267 is glycosylated (N-linked (GlcNAc...) asparagine). GMP contacts are provided by Leu272, Lys277, and Tyr322. Residues Lys277 and Tyr322 each contribute to the AMP site. CMP contacts are provided by Lys277 and Tyr322. DTMP is bound at residue Tyr322. An N-linked (GlcNAc...) asparagine glycan is attached at Asn323. Position 358 (Asp358) interacts with AMP. Zn(2+)-binding residues include Asp358, His362, Asp405, and His406. Asp358 is a CMP binding site. Asp358 serves as a coordination point for dTMP. Asp358 contributes to the GMP binding site. Residue His362 participates in 2',3'-cGAMP binding. Residue His406 coordinates AMP. Residue His406 coordinates CMP. His406 contacts dTMP. Position 406 (His406) interacts with GMP. 6 cysteine pairs are disulfide-bonded: Cys413–Cys512, Cys462–Cys849, Cys596–Cys653, Cys607–Cys707, Cys609–Cys692, and Cys819–Cys829. The N-linked (GlcNAc...) asparagine glycan is linked to Asn459. Ser514 contributes to the 2',3'-cGAMP binding site. His517 contacts AMP. His517 is a Zn(2+) binding site. His517 contributes to the CMP binding site. DTMP is bound at residue His517. His517 is a binding site for GMP. Residues Asn567 and Asn624 are each glycosylated (N-linked (GlcNAc...) asparagine). The linker stretch occupies residues 579 to 628; the sequence is KPIYTPSHPKEESFLSQCPIKSVSSDLGCTCDPSIVPIMDFEKQFNLTTD. The tract at residues 635–906 is nuclease-like domain; it reads SMTVPNGRPR…THLPIFSQED (272 aa). 5 residues coordinate Ca(2+): Asp781, Asp783, Asp785, Arg787, and Asp789.

It belongs to the nucleotide pyrophosphatase/phosphodiesterase family. In terms of assembly, ectonucleotide pyrophosphatase/phosphodiesterase family member 1: Homodimer. Ectonucleotide pyrophosphatase/phosphodiesterase family member 1: Interacts with INSR; leading to inhibit INSR autophosphorylation and subsequent activation of INSR kinase activity. Ectonucleotide pyrophosphatase/phosphodiesterase family member 1, secreted form: Monomeric. The cofactor is Zn(2+). In terms of processing, the secreted form is produced through cleavage at Lys-85 by intracellular processing.

It localises to the cell membrane. The protein resides in the basolateral cell membrane. Its subcellular location is the secreted. It catalyses the reaction Hydrolytically removes 5'-nucleotides successively from the 3'-hydroxy termini of 3'-hydroxy-terminated oligonucleotides.. The catalysed reaction is a ribonucleoside 5'-triphosphate + H2O = a ribonucleoside 5'-phosphate + diphosphate + H(+). It carries out the reaction ATP + H2O = AMP + diphosphate + H(+). The enzyme catalyses UTP + H2O = UMP + diphosphate + H(+). It catalyses the reaction GTP + H2O = GMP + diphosphate + H(+). The catalysed reaction is CTP + H2O = CMP + diphosphate + H(+). It carries out the reaction 2',3'-cGAMP + 2 H2O = GMP + AMP + 2 H(+). The enzyme catalyses P(1),P(4)-bis(5'-adenosyl) tetraphosphate + H2O = AMP + ATP + 2 H(+). It catalyses the reaction 3',5'-cyclic AMP + H2O = AMP + H(+). With respect to regulation, at low concentrations of ATP, a phosphorylated intermediate is formed which inhibits further hydrolysis. In terms of biological role, nucleotide pyrophosphatase that generates diphosphate (PPi) and functions in bone mineralization and soft tissue calcification by regulating pyrophosphate levels. PPi inhibits bone mineralization and soft tissue calcification by binding to nascent hydroxyapatite crystals, thereby preventing further growth of these crystals. Preferentially hydrolyzes ATP, but can also hydrolyze other nucleoside 5' triphosphates such as GTP, CTP and UTP to their corresponding monophosphates with release of pyrophosphate, as well as diadenosine polyphosphates, and also 3',5'-cAMP to AMP. May also be involved in the regulation of the availability of nucleotide sugars in the endoplasmic reticulum and Golgi, and the regulation of purinergic signaling. Inhibits ectopic joint calcification and maintains articular chondrocytes by repressing hedgehog signaling; it is however unclear whether hedgehog inhibition is direct or indirect. Appears to modulate insulin sensitivity. Also involved in melanogenesis. Also able to hydrolyze 2',3'-cGAMP (cyclic GMP-AMP), a second messenger that activates TMEM173/STING and triggers type-I interferon production. 2',3'-cGAMP degradation takes place in the lumen or extracellular space, and not in the cytosol where it is produced; the role of 2',3'-cGAMP hydrolysis is therefore unclear. Not able to hydrolyze the 2',3'-cGAMP linkage isomer 3'-3'-cGAMP. The sequence is that of Ectonucleotide pyrophosphatase/phosphodiesterase family member 1 from Rattus norvegicus (Rat).